Reading from the N-terminus, the 123-residue chain is Small ribosomal subunit protein uS13 (123 aa).

A disordered region spans residues 93–123; sequence RRNLPVRGQKTKTNARTRKGPKRAIGGKKKK.

This sequence belongs to the universal ribosomal protein uS13 family. Part of the 30S ribosomal subunit. Forms a loose heterodimer with protein S19. Forms two bridges to the 50S subunit in the 70S ribosome.

Functionally, located at the top of the head of the 30S subunit, it contacts several helices of the 16S rRNA. In the 70S ribosome it contacts the 23S rRNA (bridge B1a) and protein L5 of the 50S subunit (bridge B1b), connecting the 2 subunits; these bridges are implicated in subunit movement. Contacts the tRNAs in the A and P-sites. This is Small ribosomal subunit protein uS13 from Clostridium botulinum (strain Kyoto / Type A2).